The primary structure comprises 253 residues: UPF0280 protein MA_1715 (253 aa).

Belongs to the UPF0280 family.

The protein is UPF0280 protein MA_1715 of Methanosarcina acetivorans (strain ATCC 35395 / DSM 2834 / JCM 12185 / C2A).